Reading from the N-terminus, the 454-residue chain is Toxin CfTX-A (454 aa).

Residues 1-18 (MDYAFIVFLVCFVSGTLG) form the signal peptide. Residues 19-25 (NRRRAKR) constitute a propeptide that is removed on maturation. Residues 27 to 61 (VDEVTSGINQLVNQLNNVQQDTAAIKSALEELKTE) adopt a coiled-coil conformation.

The protein belongs to the jellyfish toxin family. Type II subfamily. In terms of assembly, oligomer. Contains 2 disulfide bonds. As to expression, nematocytes.

It is found in the secreted. The protein resides in the nematocyst. It localises to the target cell membrane. The fraction containing this toxin and CfTX-A shows potent hemolytic activity. This fraction causes minor effects on the cardiovascular system of anesthetized rats (at 25 ug/kg), since it has no significant effects on heart rate but produces relatively small increases in mean arterial pressure. This chain is Toxin CfTX-A, found in Chironex fleckeri (Australian box jellyfish).